Reading from the N-terminus, the 374-residue chain is Cyclin-D (374 aa).

It belongs to the cyclin family. Cyclin D subfamily.

The chain is Cyclin-D (CycD) from Ostreococcus tauri.